A 108-amino-acid polypeptide reads, in one-letter code: Ig kappa chain V-V region EPC 109 (108 aa).

Residues 1–23 form a framework-1 region; that stretch reads DVQMIQSPSSLSASLGDIVTMTC. A disulfide bridge links Cys-23 with Cys-88. Positions 24–34 are complementarity-determining-1; the sequence is QASQGTNINLN. A framework-2 region spans residues 35 to 49; it reads WFQQKPGKAPKLLIY. The segment at 50–56 is complementarity-determining-2; it reads GASILEA. The interval 57 to 88 is framework-3; sequence GVPSRFSGRRYGTDFTLTISSLEDEDMATYFC. A complementarity-determining-3 region spans residues 89-97; that stretch reads LQHSYLPYT. Residues 98-108 are framework-4; the sequence is FGGGTKLEKKR.

The protein is Ig kappa chain V-V region EPC 109 of Mus musculus (Mouse).